A 199-amino-acid polypeptide reads, in one-letter code: HTH-type transcriptional regulator BetI (199 aa).

One can recognise an HTH tetR-type domain in the interval 8–68 (EIRKPQLVKA…ETMREILRQL (61 aa)). A DNA-binding region (H-T-H motif) is located at residues 31-50 (SISLISKEAGVSTGIINHYF).

It functions in the pathway amine and polyamine biosynthesis; betaine biosynthesis via choline pathway [regulation]. In terms of biological role, repressor involved in the biosynthesis of the osmoprotectant glycine betaine. It represses transcription of the choline transporter BetT and the genes of BetAB involved in the synthesis of glycine betaine. In Vibrio parahaemolyticus serotype O3:K6 (strain RIMD 2210633), this protein is HTH-type transcriptional regulator BetI.